The sequence spans 491 residues: GTPase Der (491 aa).

EngA-type G domains lie at 54-217 (PVLA…PEYS) and 229-402 (RRIA…ESWD). GTP contacts are provided by residues 60–67 (GRPNVGKS), 107–111 (DTGGW), 169–172 (NKVD), 235–242 (GRPNVGKS), 282–286 (DTAGI), and 347–350 (NKWD). Positions 403 to 485 (RRIPTGRLNA…PIEVNMRVRE (83 aa)) constitute a KH-like domain.

The protein belongs to the TRAFAC class TrmE-Era-EngA-EngB-Septin-like GTPase superfamily. EngA (Der) GTPase family. In terms of assembly, associates with the 50S ribosomal subunit.

Its function is as follows. GTPase that plays an essential role in the late steps of ribosome biogenesis. In Paenarthrobacter aurescens (strain TC1), this protein is GTPase Der.